We begin with the raw amino-acid sequence, 423 residues long: GTPase Obg (423 aa).

Positions 1-158 (MFYDEAKIYV…RWLVLELKLL (158 aa)) constitute an Obg domain. In terms of domain architecture, OBG-type G spans 159 to 328 (ADVGLIGLPN…LLYHVSGLLA (170 aa)). GTP is bound by residues 165-172 (GLPNAGKS), 190-194 (FTTLT), 212-215 (DIPG), 281-284 (NKMD), and 309-311 (SAA). Mg(2+)-binding residues include Ser-172 and Thr-192. Residues 336-421 (VTAPEEEKVT…IGKFEFEYVE (86 aa)) form the OCT domain.

This sequence belongs to the TRAFAC class OBG-HflX-like GTPase superfamily. OBG GTPase family. As to quaternary structure, monomer. Mg(2+) is required as a cofactor.

Its subcellular location is the cytoplasm. Functionally, an essential GTPase which binds GTP, GDP and possibly (p)ppGpp with moderate affinity, with high nucleotide exchange rates and a fairly low GTP hydrolysis rate. Plays a role in control of the cell cycle, stress response, ribosome biogenesis and in those bacteria that undergo differentiation, in morphogenesis control. This Moorella thermoacetica (strain ATCC 39073 / JCM 9320) protein is GTPase Obg.